The sequence spans 66 residues: Toxin NaTx-4 (66 aa).

The LCN-type CS-alpha/beta domain occupies 1–64 (KEGYLVNKET…TFPIPGKTCS (64 aa)). Intrachain disulfides connect Cys12-Cys63, Cys16-Cys39, Cys25-Cys44, and Cys29-Cys46.

This sequence belongs to the long (4 C-C) scorpion toxin superfamily. Sodium channel inhibitor family. As to expression, expressed by the venom gland.

The protein localises to the secreted. In terms of biological role, probable sodium channel inhibitor. This is Toxin NaTx-4 from Centruroides sculpturatus (Arizona bark scorpion).